The chain runs to 302 residues: Sulfate adenylyltransferase subunit 2 (302 aa).

Belongs to the PAPS reductase family. CysD subfamily. In terms of assembly, heterodimer composed of CysD, the smaller subunit, and CysN.

The enzyme catalyses sulfate + ATP + H(+) = adenosine 5'-phosphosulfate + diphosphate. It functions in the pathway sulfur metabolism; hydrogen sulfide biosynthesis; sulfite from sulfate: step 1/3. Its function is as follows. With CysN forms the ATP sulfurylase (ATPS) that catalyzes the adenylation of sulfate producing adenosine 5'-phosphosulfate (APS) and diphosphate, the first enzymatic step in sulfur assimilation pathway. APS synthesis involves the formation of a high-energy phosphoric-sulfuric acid anhydride bond driven by GTP hydrolysis by CysN coupled to ATP hydrolysis by CysD. The protein is Sulfate adenylyltransferase subunit 2 of Escherichia coli O81 (strain ED1a).